The sequence spans 146 residues: Decoration protein (146 aa).

In terms of assembly, homotrimer. Interacts with the major capsid protein.

Its subcellular location is the virion. Its function is as follows. Cooperatively binds the expanded capsid, thereby stabilizing the mature capsid shell and allowing the large viral DNA to be packaged. Trimers of capsid decoration proteins molecules are located at local and icosahedral threefold axes and stabilize the expanded capsid, which shows increased spacing between capsomers. The polypeptide is Decoration protein (Thermus thermophilus (Thermus thermophilus phage P23-45)).